The sequence spans 201 residues: Small ribosomal subunit protein uS4c (201 aa).

Residues 20–44 (GLTNKKPRAGSDLRNQSRSGKKSQY) are disordered. The 62-residue stretch at 89–150 (MRLDNILFRL…EQKSKALIQI (62 aa)) folds into the S4 RNA-binding domain.

Belongs to the universal ribosomal protein uS4 family. As to quaternary structure, part of the 30S ribosomal subunit. Contacts protein S5. The interaction surface between S4 and S5 is involved in control of translational fidelity.

It localises to the plastid. Its subcellular location is the chloroplast. One of the primary rRNA binding proteins, it binds directly to 16S rRNA where it nucleates assembly of the body of the 30S subunit. Its function is as follows. With S5 and S12 plays an important role in translational accuracy. This is Small ribosomal subunit protein uS4c (rps4) from Nicotiana tomentosiformis (Tobacco).